The chain runs to 463 residues: ATP-dependent protease ATPase subunit HslU (463 aa).

ATP is bound by residues Ile19 and Gly61–Glu66. The segment at Phe154 to Lys175 is disordered. The span at Gly156–Asp165 shows a compositional bias: polar residues. Asp277, Glu341, and Arg413 together coordinate ATP.

Belongs to the ClpX chaperone family. HslU subfamily. In terms of assembly, a double ring-shaped homohexamer of HslV is capped on each side by a ring-shaped HslU homohexamer. The assembly of the HslU/HslV complex is dependent on binding of ATP.

Its subcellular location is the cytoplasm. ATPase subunit of a proteasome-like degradation complex; this subunit has chaperone activity. The binding of ATP and its subsequent hydrolysis by HslU are essential for unfolding of protein substrates subsequently hydrolyzed by HslV. HslU recognizes the N-terminal part of its protein substrates and unfolds these before they are guided to HslV for hydrolysis. The sequence is that of ATP-dependent protease ATPase subunit HslU from Bacillus mycoides (strain KBAB4) (Bacillus weihenstephanensis).